We begin with the raw amino-acid sequence, 319 residues long: MSSEKPKPHLNKTWYVILFIFALSLFSSVFLSTVYYILAPFEERAAIFDRDQQMLTAAHVLDFSGKFQIYEEGSWQPAVYDKKSHLLKVADQHAPVVTSSVLDAYTQGFVRPLLADKLGQMFSFEEKNINVTEFIEKHQNGHFYQQPLLLFYVILANTEQARAMSAADVIKNPSVVRAIIIPISGFGLWGPIYGYLAVENNGDTVLGTAWYQQAETPGLGANIANPQWQKQFYGKKIFLQAAAGNTDFATTPLGLEVIKGSVQSAFGTTPKALSSIDGISGATLTCNGVTEAYAQSLAPYRNLLISFAKLNQRDHNGSK.

The chain crosses the membrane as a helical span at residues 14–34 (WYVILFIFALSLFSSVFLSTV). An FMN phosphoryl threonine modification is found at T283.

This sequence belongs to the NqrC family. In terms of assembly, composed of six subunits; NqrA, NqrB, NqrC, NqrD, NqrE and NqrF. FMN is required as a cofactor.

Its subcellular location is the cell inner membrane. The catalysed reaction is a ubiquinone + n Na(+)(in) + NADH + H(+) = a ubiquinol + n Na(+)(out) + NAD(+). Functionally, NQR complex catalyzes the reduction of ubiquinone-1 to ubiquinol by two successive reactions, coupled with the transport of Na(+) ions from the cytoplasm to the periplasm. NqrA to NqrE are probably involved in the second step, the conversion of ubisemiquinone to ubiquinol. In Chlamydia caviae (strain ATCC VR-813 / DSM 19441 / 03DC25 / GPIC) (Chlamydophila caviae), this protein is Na(+)-translocating NADH-quinone reductase subunit C.